Here is a 76-residue protein sequence, read N- to C-terminus: MKNILFRINELSKKEKATGLTVDEKQEQQMLRQNYTETFRGSLDSILLNTKIVDQNGLNVTPAALQDAQIRLKLSK.

This sequence belongs to the UPF0291 family.

It localises to the cytoplasm. This is UPF0291 protein BC_1827 from Bacillus cereus (strain ATCC 14579 / DSM 31 / CCUG 7414 / JCM 2152 / NBRC 15305 / NCIMB 9373 / NCTC 2599 / NRRL B-3711).